The sequence spans 140 residues: Large ribosomal subunit protein uL22c (140 aa).

The protein belongs to the universal ribosomal protein uL22 family. In terms of assembly, part of the 50S ribosomal subunit.

The protein resides in the plastid. It is found in the chloroplast. Its function is as follows. This protein binds specifically to 23S rRNA. Functionally, the globular domain of the protein is located near the polypeptide exit tunnel on the outside of the subunit, while an extended beta-hairpin is found that lines the wall of the exit tunnel in the center of the 70S ribosome. This Calycanthus floridus var. glaucus (Eastern sweetshrub) protein is Large ribosomal subunit protein uL22c (rpl22).